The primary structure comprises 681 residues: Envelope glycoprotein (681 aa).

Positions 1–18 are cleaved as a signal peptide; that stretch reads MKTTCLLISLILIQGVKT. Topologically, residues 19–648 are extracellular; the sequence is LPILEIASNI…GLGGKWWTSD (630 aa). The receptor-binding stretch occupies residues 38-188; the sequence is SGTLQKTEDV…FSRQGQGYRH (151 aa). N-linked (GlcNAc...) asparagine; by host glycosylation is found at Asn-94, Asn-171, Asn-190, Asn-202, Asn-207, Asn-219, Asn-223, and Asn-255. The disordered stretch occupies residues 222–424; sequence KNQTCAPSKK…TSPSPTPNST (203 aa). Composition is skewed to polar residues over residues 244–259, 278–290, and 308–331; these read LTSTSTDATKLNTTDP, PYTTSDAATKQGL, and GGNNTNHSQGVVTEPGKTNTTAQP. Positions 277 to 455 are mucin-like region; it reads EPYTTSDAAT…PFLDGLINAP (179 aa). N-linked (GlcNAc...) asparagine; by host glycans are attached at residues Asn-310, Asn-313, Asn-326, Asn-337, Asn-344, Asn-345, Asn-350, Asn-360, Asn-397, Asn-408, Asn-422, and Asn-487. The segment covering 337-347 has biased composition (low complexity); it reads NTTTISTNNTS. Over residues 348–388 the composition is skewed to polar residues; that stretch reads KHNLSTPSVPIQNATNYNTQSTAPENEQTSAPSKTTLLPTE. A compositionally biased stretch (low complexity) spans 389–424; that stretch reads NPTTAKSTNSTKSPTTTVPNTTNKYSTSPSPTPNST. The fusion peptide stretch occupies residues 529–549; the sequence is GLSWIPFFGPGIEGLYTAGLI. 2 N-linked (GlcNAc...) asparagine; by host glycosylation sites follow: Asn-564 and Asn-619. The chain crosses the membrane as a helical span at residues 649-669; sequence WGVLTNLGILLLLSIAVLIAL. Residues 670–681 lie on the Cytoplasmic side of the membrane; sequence SCICRIFTKYIG. Residues Cys-671 and Cys-673 are each lipidated (S-palmitoyl cysteine; by host).

It belongs to the filoviruses glycoprotein family. In terms of assembly, homotrimer; each monomer consists of a GP1 and a GP2 subunit linked by disulfide bonds. The resulting peplomers (GP1,2) protrude from the virus surface as spikes. GP1,2 interacts with human CD209 and CLEC4M (collectively referred to as DC-SIGN(R)). Asialoglycoprotein receptor (ASGP-R) may be a liver-specific receptor for GP1,2. Members of the Tyro3 receptor tyrosine kinase family may be cell entry factors interacting with GP1,2. N-glycosylated. Post-translationally, O-glycosylated in the mucin-like region. In terms of processing, specific enzymatic cleavages in vivo yield mature proteins. The precursor is processed into GP1 and GP2 by host cell furin in the trans Golgi, and maybe by other host proteases, to yield the mature GP1 and GP2 proteins. The cleavage site corresponds to the furin optimal cleavage sequence [KR]-X-[KR]-R. GP1 is phosphorylated on serine residues between residues 260 and 273.

The protein resides in the virion membrane. It is found in the host cell membrane. GP1 is responsible for binding to the receptor(s) on target cells. Interacts with CD209/DC-SIGN and CLEC4M/DC-SIGNR which act as cofactors for virus entry into the host cell. Binding to CD209 and CLEC4M, which are respectively found on dendritic cells (DCs), and on endothelial cells of liver sinusoids and lymph node sinuses, facilitate infection of macrophages and endothelial cells. These interactions not only facilitate virus cell entry, but also allow capture of viral particles by DCs and subsequent transmission to susceptible cells without DCs infection (trans infection). Functionally, GP2 acts as a class I viral fusion protein. Under the current model, the protein has at least 3 conformational states: pre-fusion native state, pre-hairpin intermediate state, and post-fusion hairpin state. During viral and target cell membrane fusion, the coiled coil regions (heptad repeats) assume a trimer-of-hairpins structure, positioning the fusion peptide in close proximity to the C-terminal region of the ectodomain. The formation of this structure appears to drive apposition and subsequent fusion of viral and target cell membranes. Responsible for penetration of the virus into the cell cytoplasm by mediating the fusion of the membrane of the endocytosed virus particle with the endosomal membrane. Low pH in endosomes induces an irreversible conformational change in GP2, releasing the fusion hydrophobic peptide. The sequence is that of Envelope glycoprotein (GP) from Chlorocebus aethiops (Green monkey).